The sequence spans 192 residues: Sarcoplasmic calcium-binding protein, alpha-B and -A chains (192 aa).

N-acetylalanine is present on Ala1. EF-hand domains are found at residues 4-39 (WDNR…NTLI), 56-91 (IMRN…HCQG), 100-135 (AFKV…RSAF), and 136-171 (AEVK…YAQF). 14 residues coordinate Ca(2+): Asp17, Asp19, Asp21, Asp28, Asp69, Asn71, Asp73, Glu75, Glu80, Asp113, Asn115, Asp117, Lys119, and Glu124.

As to quaternary structure, SCPs from crayfish, lobster, and shrimp are polymorphic dimers; three isotypes (alpha-alpha, alpha-beta, and beta-beta) have been identified.

Like parvalbumins, SCPs seem to be more abundant in fast contracting muscles, but no functional relationship can be established from this distribution. This chain is Sarcoplasmic calcium-binding protein, alpha-B and -A chains, found in Penaeus sp. (Penoeid shrimp).